The primary structure comprises 846 residues: MRCNERNKKKAIFSNDDFSGEDTLMEDHLQLREKLSEDIEMIKASLKNNLVCSTLNDNEILTLSNYMQFFVFKGGDLVIKQGEKGSYFFIINSGKFDVYVNDKKVKSMGKGSSFGEAALIHNTQRSATIMAETDGTLWGVQRSTFRATLKQLSNRNFNENRSFIDSVSVFDMLTEAQKNMITNACVIQMFKPGETIVKQGDYGDVLFILKEGKATVFINDKEIRVLNKGSYFGERALLYDEPRSATIIAKEPTACASICRKLLNIVLGNLQVVLFRNIMTEALQQSEIFRQFSAEQLNDLADTAIVRDYPANYHILHKDKVKSVKYLIVLEGKVELFLDDESIGILTRGKSFGDQYVLNQKQKFRHTVKSLDVCKIALITESCLADCLGDNNIDASIDHNNKKSIIKKMYIFRYLSEQQCNLLIEAFRTTRYEEGDYIIQEGEVGSRFYIIKNGEVEVTKNGKRLRTLGKNDYFGERALLYDEPRTASIISKATSVECWFVDKSVFLQIIQGPMLTHLEERIKMQDTKVEMHELETERIIGRGTFGTVKLVHHKPTQIRYALKCVSKRSIISLNQQNNIKLEREITAENDHPFIIRLVRTFKDSNCFYFLTELVTGGELYDAIRKLGLLSKPQAQFYLGSIILAIEYLHERNIVYRDLKPENILLDKQGYVKLIDFGCAKKIQGRAYTLVGTPHYMAPEVILGKGYGCTVDIWALGVCLYEFICGPLPFGNDQEDQLEIFRDILTGQLTFPDYVSDQDSINLMKRLLCRLPQGRIGCSINGFKDIKEHAFFGNFNWDKLAGRLLEPPLVSKGETYAEDIDIKQIEEEDALNEGEPLDGDDSWDVDF.

Residues 1 to 22 (MRCNERNKKKAIFSNDDFSGED) are autoinhibitory segment. 4 cNMP-binding domain regions span residues 51–166 (VCST…FIDS), 169–268 (VFDM…IVLG), 288–391 (IFRQ…LGDN), and 411–510 (IFRY…LQII). Residues Lys-106, Gly-115, Glu-116, Ala-118, Arg-125, and Ser-126 each coordinate 3',5'-cyclic GMP. 6 residues coordinate 3',5'-cyclic GMP: Arg-466, Gly-475, Glu-476, Ala-478, Arg-485, and Thr-486. The region spanning 534-791 (LETERIIGRG…FKDIKEHAFF (258 aa)) is the Protein kinase domain. Residues 540–548 (IGRGTFGTV) and Lys-563 contribute to the ATP site. Residue Asp-657 is the Proton acceptor of the active site. The AGC-kinase C-terminal domain occupies 792 to 846 (GNFNWDKLAGRLLEPPLVSKGETYAEDIDIKQIEEEDALNEGEPLDGDDSWDVDF). The segment at 824 to 846 (IEEEDALNEGEPLDGDDSWDVDF) is disordered. Positions 825–846 (EEEDALNEGEPLDGDDSWDVDF) are enriched in acidic residues.

It belongs to the protein kinase superfamily. AGC Ser/Thr protein kinase family. cGMP subfamily. As to quaternary structure, monomer. Mg(2+) serves as cofactor. In terms of processing, autophosphorylated.

It is found in the cytoplasm. The protein resides in the endoplasmic reticulum membrane. The catalysed reaction is L-seryl-[protein] + ATP = O-phospho-L-seryl-[protein] + ADP + H(+). It carries out the reaction L-threonyl-[protein] + ATP = O-phospho-L-threonyl-[protein] + ADP + H(+). With respect to regulation, activated by cGMP. Not activated by cAMP. cGMP binding allosterically triggers a conformational change at the alpha C-helix of cGMP-binding domain 4, which bridges the regulatory and catalytic domains, causing the capping triad, composed of Arg-477, Gln-525 and Asp-526, to form and stabilize the active conformation. The cGMP-binding domains acts cooperatively to activate PKG. Its function is as follows. Serine/threonine protein kinase which acts as a downstream effector of the second messenger cGMP. Controls the release of Ca(2+) from intracellular stores by regulating phosphoinositide biosynthesis. Ca(2+) signals are essential for merozoite and sporozoite invasion and egress from host hepatocytes and erythrocytes, and, in the mosquito vector, for gametocyte activation, and ookinete and sporozoite motility. During the host liver stage, regulates the initial invasion of host hepatocytes by sporozoites by regulating sporozoite motility and microneme exocytosis. Following parasite development in the hepatocytes, required for the release of merosomes, a vesicle containing the mature merozoites. During the asexual blood stage, required for the progression from schizont to the ring stage following merozoite invasion of host erythrocytes and for merozoite egress. Regulates merozoite egress by promoting the release of exonemes and micronemes which contain proteins essential for egress. Phosphorylates CDPK1 predominantly at the late schizont stage; phosphorylation at 'Ser-64' regulates CDPK1 protein-protein interaction and phosphorylation at 'Thr-231' may regulate CDPK1 kinase activity. In the mosquito vector, required for the initiation of gametogenesis induced by xanthurenic acid, specifically the gametocyte differentiation from the crescent-shaped form to the spherical form. Required for the gliding motility of ookinetes to reach and penetrate the midgut epithelium by promoting Ca(2+)-mediated activation of CDPK1 and CDPK4. Also required for microneme secretion in ookinete by promoting Ca(2+)-mediated activation of CDPK3. The sequence is that of cGMP-dependent protein kinase from Plasmodium vivax (strain Salvador I).